We begin with the raw amino-acid sequence, 135 residues long: Hemoglobin subunit beta-3 (135 aa).

One can recognise a Globin domain in the interval 2-135; it reads HWTAEEKALV…VVDALSKAYQ (134 aa). The heme b site is built by histidine 57 and histidine 81.

It belongs to the globin family. As to quaternary structure, hb 3 is a heterotetramer of two alpha and two beta-3 chains. As to expression, red blood cells (at protein level).

Its function is as follows. Involved in oxygen transport from gills to the various peripheral tissues. The sequence is that of Hemoglobin subunit beta-3 from Somniosus microcephalus (Greenland sleeper shark).